The chain runs to 264 residues: tRNA (guanine-N(1)-)-methyltransferase (264 aa).

S-adenosyl-L-methionine-binding positions include glycine 125 and 145 to 150 (LGDFVL).

The protein belongs to the RNA methyltransferase TrmD family. In terms of assembly, homodimer.

The protein resides in the cytoplasm. It carries out the reaction guanosine(37) in tRNA + S-adenosyl-L-methionine = N(1)-methylguanosine(37) in tRNA + S-adenosyl-L-homocysteine + H(+). Its function is as follows. Specifically methylates guanosine-37 in various tRNAs. This is tRNA (guanine-N(1)-)-methyltransferase from Burkholderia cenocepacia (strain ATCC BAA-245 / DSM 16553 / LMG 16656 / NCTC 13227 / J2315 / CF5610) (Burkholderia cepacia (strain J2315)).